Here is a 199-residue protein sequence, read N- to C-terminus: Recombination protein RecR (199 aa).

The C4-type zinc-finger motif lies at 58 to 73 (CQTCHHLSAEPTCEIC). In terms of domain architecture, Toprim spans 81 to 175 (GQICVVADSR…RVSRIAYGLP (95 aa)).

The protein belongs to the RecR family.

In terms of biological role, may play a role in DNA repair. It seems to be involved in an RecBC-independent recombinational process of DNA repair. It may act with RecF and RecO. The polypeptide is Recombination protein RecR (Synechococcus sp. (strain WH7803)).